We begin with the raw amino-acid sequence, 452 residues long: Probable mannose-6-phosphate isomerase (452 aa).

Zn(2+)-binding residues include Gln-141, His-143, Glu-168, and His-295. Arg-314 is a catalytic residue.

The protein belongs to the mannose-6-phosphate isomerase type 1 family. Zn(2+) is required as a cofactor.

The protein resides in the cytoplasm. The catalysed reaction is D-mannose 6-phosphate = D-fructose 6-phosphate. It participates in nucleotide-sugar biosynthesis; GDP-alpha-D-mannose biosynthesis; alpha-D-mannose 1-phosphate from D-fructose 6-phosphate: step 1/2. Involved in the synthesis of the GDP-mannose and dolichol-phosphate-mannose required for a number of critical mannosyl transfer reactions. In Dictyostelium discoideum (Social amoeba), this protein is Probable mannose-6-phosphate isomerase (mpi).